Consider the following 902-residue polypeptide: Nitrate reductase [NADPH] (902 aa).

Cysteine 182 lines the Mo-molybdopterin pocket. The region spanning 537 to 612 is the Cytochrome b5 heme-binding domain; the sequence is LPLIFADEVA…LKKYCIGRCS (76 aa). Heme is bound by residues histidine 572 and histidine 595. One can recognise an FAD-binding FR-type domain in the interval 637 to 751; that stretch reads RTKVPIVLIS…KGPLGHFTYY (115 aa). Residues 689-692, 708-712, phenylalanine 713, 725-727, and threonine 778 contribute to the FAD site; these read RAYT, LIKVY, and LFS. 872-879 serves as a coordination point for NADP(+); it reads CMCGPEGM.

This sequence belongs to the nitrate reductase family. As to quaternary structure, homodimer. FAD serves as cofactor. Requires heme as cofactor. Mo-molybdopterin is required as a cofactor.

The enzyme catalyses nitrite + NADP(+) + H2O = nitrate + NADPH + H(+). Nitrate reductase is a key enzyme involved in the first step of nitrate assimilation in plants, fungi and bacteria. The sequence is that of Nitrate reductase [NADPH] (NIAA) from Phytophthora infestans (Potato late blight agent).